The following is a 325-amino-acid chain: 6-phosphogluconolactonase 3, chloroplastic (325 aa).

Residues 1 to 68 (MASSSCFLRS…KSSDTRRKVK (68 aa)) constitute a chloroplast transit peptide. Residues 51 to 73 (SIGTGSTKKSSDTRRKVKSMATT) form a disordered region. Residues 323–325 (SKL) carry the Microbody targeting signal motif.

It belongs to the glucosamine/galactosamine-6-phosphate isomerase family. 6-phosphogluconolactonase subfamily. As to quaternary structure, interacts with TRXM2. In terms of tissue distribution, expressed in roots, leaves and shoots.

It is found in the plastid. It localises to the chloroplast. Its subcellular location is the peroxisome. The enzyme catalyses 6-phospho-D-glucono-1,5-lactone + H2O = 6-phospho-D-gluconate + H(+). It functions in the pathway carbohydrate degradation; pentose phosphate pathway; D-ribulose 5-phosphate from D-glucose 6-phosphate (oxidative stage): step 2/3. Its function is as follows. Catalyzes the hydrolysis of 6-phosphogluconolactone to 6-phosphogluconate. Involved in the regulation of cellular redox state; enzymatic activity is required for this function. Required for sugar-dependent expression of nitrate assimilation genes in the nucleus of root cells. The protein is 6-phosphogluconolactonase 3, chloroplastic of Arabidopsis thaliana (Mouse-ear cress).